We begin with the raw amino-acid sequence, 195 residues long: Molybdenum cofactor guanylyltransferase (195 aa).

GTP-binding positions include 10-12, K23, N51, D69, and D99; that span reads LAG. A Mg(2+)-binding site is contributed by D99.

This sequence belongs to the MobA family. In terms of assembly, monomer. Mg(2+) serves as cofactor.

It is found in the cytoplasm. The enzyme catalyses Mo-molybdopterin + GTP + H(+) = Mo-molybdopterin guanine dinucleotide + diphosphate. Functionally, transfers a GMP moiety from GTP to Mo-molybdopterin (Mo-MPT) cofactor (Moco or molybdenum cofactor) to form Mo-molybdopterin guanine dinucleotide (Mo-MGD) cofactor. This chain is Molybdenum cofactor guanylyltransferase, found in Yersinia pseudotuberculosis serotype O:1b (strain IP 31758).